We begin with the raw amino-acid sequence, 204 residues long: Probable calcium-binding protein CML46 (204 aa).

3 EF-hand domains span residues 72–106, 132–167, and 170–204; these read LEFQTSIKHEEYRDDDDDGLCREDVGMVMKSLGLS, PSLEEVKQAFDVFDENRDGFIDPIDLQRVLTILGLK, and SNLENCRRMIRSFDGSKDGRIDFYGFVKFMENNFC. The Ca(2+) site is built by D145, N147, D149, and D156.

Potential calcium sensor. The polypeptide is Probable calcium-binding protein CML46 (Arabidopsis thaliana (Mouse-ear cress)).